The following is a 608-amino-acid chain: Thiol:disulfide interchange protein DsbD (608 aa).

Residues 1–22 form the signal peptide; the sequence is MKNLLSLCFLMLAAFTLNPAAA. Cys-135 and Cys-141 are joined by a disulfide. A compositionally biased stretch (polar residues) spans 161 to 173; the sequence is SAPSSDAAQQTNE. Residues 161-180 form a disordered region; it reads SAPSSDAAQQTNEGEVKKSE. 8 helical membrane-spanning segments follow: residues 194-214, 241-261, 273-293, 314-334, 352-372, 387-407, 414-434, and 456-476; these read LLTL…PCVF, FFYV…VAMA, IVLI…FGVF, GGSI…ASPC, VVLG…PLLI, WMNI…VFLL, VASQ…FYVA, and SLVI…LIYP. A disulfide bond links Cys-212 and Cys-334. In terms of domain architecture, Thioredoxin spans 469 to 608; it reads LAYQLIYPSS…FSAHVKSIFK (140 aa). A disulfide bond links Cys-522 and Cys-525.

It belongs to the thioredoxin family. DsbD subfamily.

The protein resides in the cell inner membrane. It catalyses the reaction [protein]-dithiol + NAD(+) = [protein]-disulfide + NADH + H(+). It carries out the reaction [protein]-dithiol + NADP(+) = [protein]-disulfide + NADPH + H(+). Required to facilitate the formation of correct disulfide bonds in some periplasmic proteins and for the assembly of the periplasmic c-type cytochromes. Acts by transferring electrons from cytoplasmic thioredoxin to the periplasm. This transfer involves a cascade of disulfide bond formation and reduction steps. This Colwellia psychrerythraea (strain 34H / ATCC BAA-681) (Vibrio psychroerythus) protein is Thiol:disulfide interchange protein DsbD.